A 198-amino-acid chain; its full sequence is Holliday junction resolvase RecU (198 aa).

The interval 1-22 (MVNYPHKVSSQKRQTSLSQPKN) is disordered. Residues 11–22 (QKRQTSLSQPKN) are compositionally biased toward polar residues. The Mg(2+) site is built by Thr81, Asp83, Glu96, and Gln115.

The protein belongs to the RecU family. The cofactor is Mg(2+).

The protein localises to the cytoplasm. The catalysed reaction is Endonucleolytic cleavage at a junction such as a reciprocal single-stranded crossover between two homologous DNA duplexes (Holliday junction).. In terms of biological role, endonuclease that resolves Holliday junction intermediates in genetic recombination. Cleaves mobile four-strand junctions by introducing symmetrical nicks in paired strands. Promotes annealing of linear ssDNA with homologous dsDNA. Required for DNA repair, homologous recombination and chromosome segregation. This chain is Holliday junction resolvase RecU, found in Streptococcus pneumoniae serotype 2 (strain D39 / NCTC 7466).